The primary structure comprises 503 residues: Surface lipoprotein assembly modifier (503 aa).

The N-terminal stretch at methionine 1–alanine 34 is a signal peptide. The tract at residues arginine 38–aspartate 220 is N-terminal domain. One copy of the TPR repeat lies at isoleucine 136–tyrosine 169. Positions serine 221–phenylalanine 503 are C-terminal probable beta barrel. 14 beta stranded membrane passes run tryptophan 222–lysine 232, leucine 259–serine 270, alanine 275–glycine 285, glycine 299–alanine 308, aspartate 313–lysine 322, isoleucine 334–arginine 343, phenylalanine 348–arginine 358, threonine 372–proline 382, tyrosine 387–aspartate 396, arginine 410–glutamate 419, leucine 424–lysine 434, methionine 454–arginine 463, isoleucine 470–asparagine 479, and asparagine 493–phenylalanine 503.

It belongs to the Slam family.

Its subcellular location is the cell outer membrane. Functionally, required for correct export to the cell surface of some cell outer membrane lipoproteins (tested with TpbP) upon heterologous expression in E.coli and probably also in Moraxella. In Moraxella catarrhalis (Branhamella catarrhalis), this protein is Surface lipoprotein assembly modifier.